Reading from the N-terminus, the 296-residue chain is Glycine--tRNA ligase alpha subunit (296 aa).

Belongs to the class-II aminoacyl-tRNA synthetase family. Tetramer of two alpha and two beta subunits.

It is found in the cytoplasm. The enzyme catalyses tRNA(Gly) + glycine + ATP = glycyl-tRNA(Gly) + AMP + diphosphate. This is Glycine--tRNA ligase alpha subunit from Francisella philomiragia subsp. philomiragia (strain ATCC 25017 / CCUG 19701 / FSC 153 / O#319-036).